The following is a 374-amino-acid chain: MVKSTDGGGGSSSSSSVAPFLRKCYDMVDDSTTDSIISWSPSADNSFVILDTTVFSVQLLPKYFKHSNFSSFIRQLNIYGFRKVDADRWEFANDGFVRGQKDLLKNVIRRKNVQSSEQSKHESTSTTYAQEKSGLWKEVDILKGDKQVLAQELIKVRQYQEVTDTKMLHLEDRVQGMEESQQEMLSFLVMVMKNPSLLVQLLQPKEKNTWRKAGEGAKIVEEVTDEGESNSYGLPLVTYQPPSDNNGTAKSNSNDVNDFLRNADMLKFCLDENHVPLIIPDLYDDGAWEKLLLLSPSRKKTKKQENIVKKGKDDLTLEEEEEDGTMELDKSYMLKLISEEMEKPDDFEFGQLTPERSRNLEILTEQMELLASNE.

Residues 17–112 mediate DNA binding; the sequence is VAPFLRKCYD…LLKNVIRRKN (96 aa). The tract at residues 126 to 192 is hydrophobic repeat HR-A/B; that stretch reads TTYAQEKSGL…EMLSFLVMVM (67 aa). The AHA1 motif lies at 285-294; that stretch reads DGAWEKLLLL. Residues 298-303 carry the Nuclear localization signal motif; sequence RKKTKK. The AHA2 signature appears at 330 to 339; sequence KSYMLKLISE. Positions 363–370 match the Nuclear export signal motif; the sequence is LTEQMELL.

The protein belongs to the HSF family. Class A subfamily. In terms of assembly, homotrimer. In terms of processing, exhibits temperature-dependent phosphorylation.

Its subcellular location is the cytoplasm. It localises to the nucleus. In terms of biological role, transcriptional activator that specifically binds DNA sequence 5'-AGAAnnTTCT-3' known as heat shock promoter elements (HSE). This is Heat stress transcription factor A-8 (HSFA8) from Arabidopsis thaliana (Mouse-ear cress).